The sequence spans 754 residues: uncharacterized protein (754 aa).

Catalysis depends on charge relay system residues S585 and H707. Residues 733–754 (SHAPPPSRKARSAARRSTDPVR) are disordered.

It belongs to the peptidase S9A family.

This is an uncharacterized protein from Sinorhizobium fredii (strain NBRC 101917 / NGR234).